Reading from the N-terminus, the 357-residue chain is Glutamate 5-kinase (357 aa).

Lys7 provides a ligand contact to ATP. 3 residues coordinate substrate: Ser43, Asp130, and Asn142. ATP-binding positions include 162–163 (TD) and 205–211 (TGGMTTK). The region spanning 270 to 353 (EGELQLDAGA…PVVVHRDGLV (84 aa)) is the PUA domain.

It belongs to the glutamate 5-kinase family.

It localises to the cytoplasm. It catalyses the reaction L-glutamate + ATP = L-glutamyl 5-phosphate + ADP. It functions in the pathway amino-acid biosynthesis; L-proline biosynthesis; L-glutamate 5-semialdehyde from L-glutamate: step 1/2. Catalyzes the transfer of a phosphate group to glutamate to form L-glutamate 5-phosphate. The chain is Glutamate 5-kinase from Synechococcus sp. (strain CC9605).